The sequence spans 577 residues: Outer spore wall assembly protein SHE10 (577 aa).

Residues 1-23 (MGKLIKLITTLTVLVSLLQYCCE) form the signal peptide. 2 coiled-coil regions span residues 379 to 416 (NETR…ENVE) and 513 to 561 (ILRS…EEDV). Basic and acidic residues predominate over residues 525-545 (RERKERERKEREKAAAEEFQR). The tract at residues 525–577 (RERKERERKEREKAAAEEFQRQQELLRQQEEEDEEDVSYTSTSTITTTTTMTL) is disordered. The segment covering 562 to 577 (SYTSTSTITTTTTMTL) has biased composition (low complexity).

Belongs to the SHE10 family. In terms of assembly, component of the mitochondria-localized RNase mitochondrial RNA-processing (RNase MRP) composed of one single RNA encoded by the NME1 gene and at least 31 proteins. Absent in the nucleus-localized RNase MRP (NuMRP).

The protein localises to the mitochondrion. Functionally, involved in spore wall assembly. May be a component of the mitochondrial RNase MRP (MtMRP), a ribonucleoprotein endoribonuclease involved in the cleaving RNA transcripts to generate primers for DNA replication in mitochondria. In Saccharomyces cerevisiae (strain Lalvin EC1118 / Prise de mousse) (Baker's yeast), this protein is Outer spore wall assembly protein SHE10.